The primary structure comprises 156 residues: Small ribosomal subunit protein uS7 (156 aa).

It belongs to the universal ribosomal protein uS7 family. As to quaternary structure, part of the 30S ribosomal subunit. Contacts proteins S9 and S11.

Functionally, one of the primary rRNA binding proteins, it binds directly to 16S rRNA where it nucleates assembly of the head domain of the 30S subunit. Is located at the subunit interface close to the decoding center, probably blocks exit of the E-site tRNA. This chain is Small ribosomal subunit protein uS7, found in Nitratidesulfovibrio vulgaris (strain ATCC 29579 / DSM 644 / CCUG 34227 / NCIMB 8303 / VKM B-1760 / Hildenborough) (Desulfovibrio vulgaris).